Consider the following 70-residue polypeptide: Putative membrane protein insertion efficiency factor (70 aa).

Belongs to the UPF0161 family.

It is found in the cell inner membrane. Could be involved in insertion of integral membrane proteins into the membrane. In Desulforapulum autotrophicum (strain ATCC 43914 / DSM 3382 / VKM B-1955 / HRM2) (Desulfobacterium autotrophicum), this protein is Putative membrane protein insertion efficiency factor.